Consider the following 524-residue polypeptide: Cytochrome P450 1A1 (524 aa).

The tract at residues 33–44 (LRTQVPKGLKTP) is mitochondrial targeting signal. Ser71 carries O-linked (GlcNAc) serine glycosylation. Position 228 (Phe228) interacts with substrate. Cys461 provides a ligand contact to heme.

The protein belongs to the cytochrome P450 family. In terms of assembly, interacts with cytosolic chaperones HSP70 and HSP90; this interaction is required for initial targeting to mitochondria. Interacts (via mitochondrial targeting signal) with TOMM40 (via N-terminus); this interaction is required for translocation across the mitochondrial outer membrane. Heme serves as cofactor.

It is found in the endoplasmic reticulum membrane. The protein localises to the mitochondrion inner membrane. The protein resides in the microsome membrane. Its subcellular location is the cytoplasm. The enzyme catalyses an organic molecule + reduced [NADPH--hemoprotein reductase] + O2 = an alcohol + oxidized [NADPH--hemoprotein reductase] + H2O + H(+). The catalysed reaction is estrone + reduced [NADPH--hemoprotein reductase] + O2 = 2-hydroxyestrone + oxidized [NADPH--hemoprotein reductase] + H2O + H(+). It catalyses the reaction estrone + reduced [NADPH--hemoprotein reductase] + O2 = 4-hydroxyestrone + oxidized [NADPH--hemoprotein reductase] + H2O + H(+). It carries out the reaction estrone + reduced [NADPH--hemoprotein reductase] + O2 = 6alpha-hydroxyestrone + oxidized [NADPH--hemoprotein reductase] + H2O + H(+). The enzyme catalyses estrone + reduced [NADPH--hemoprotein reductase] + O2 = 15alpha-hydroxyestrone + oxidized [NADPH--hemoprotein reductase] + H2O + H(+). The catalysed reaction is estrone + reduced [NADPH--hemoprotein reductase] + O2 = 16alpha-hydroxyestrone + oxidized [NADPH--hemoprotein reductase] + H2O + H(+). It catalyses the reaction 17beta-estradiol + reduced [NADPH--hemoprotein reductase] + O2 = 2-hydroxy-17beta-estradiol + oxidized [NADPH--hemoprotein reductase] + H2O + H(+). It carries out the reaction 17beta-estradiol + reduced [NADPH--hemoprotein reductase] + O2 = 4-hydroxy-17beta-estradiol + oxidized [NADPH--hemoprotein reductase] + H2O + H(+). The enzyme catalyses 17beta-estradiol + reduced [NADPH--hemoprotein reductase] + O2 = 6alpha-hydroxy-17beta-estradiol + oxidized [NADPH--hemoprotein reductase] + H2O + H(+). The catalysed reaction is 17beta-estradiol + reduced [NADPH--hemoprotein reductase] + O2 = 7alpha-hydroxy-17beta-estradiol + oxidized [NADPH--hemoprotein reductase] + H2O + H(+). It catalyses the reaction 17beta-estradiol + reduced [NADPH--hemoprotein reductase] + O2 = 15alpha-hydroxy-17beta-estradiol + oxidized [NADPH--hemoprotein reductase] + H2O + H(+). It carries out the reaction (5Z,8Z,11Z)-eicosatrienoate + reduced [NADPH--hemoprotein reductase] + O2 = 19-hydroxy-(5Z,8Z,11Z)-eicosatrienoate + oxidized [NADPH--hemoprotein reductase] + H2O + H(+). The enzyme catalyses (5Z,8Z,11Z,14Z)-eicosatetraenoate + reduced [NADPH--hemoprotein reductase] + O2 = 16-hydroxy-(5Z,8Z,11Z,14Z)-eicosatetraenoate + oxidized [NADPH--hemoprotein reductase] + H2O + H(+). The catalysed reaction is (5Z,8Z,11Z,14Z)-eicosatetraenoate + reduced [NADPH--hemoprotein reductase] + O2 = 17-hydroxy-(5Z,8Z,11Z,14Z)-eicosatetraenoate + oxidized [NADPH--hemoprotein reductase] + H2O + H(+). It catalyses the reaction (5Z,8Z,11Z,14Z)-eicosatetraenoate + reduced [NADPH--hemoprotein reductase] + O2 = 18-hydroxy-(5Z,8Z,11Z,14Z)-eicosatetraenoate + oxidized [NADPH--hemoprotein reductase] + H2O + H(+). It carries out the reaction (5Z,8Z,11Z,14Z)-eicosatetraenoate + reduced [NADPH--hemoprotein reductase] + O2 = 19-hydroxy-(5Z,8Z,11Z,14Z)-eicosatetraenoate + oxidized [NADPH--hemoprotein reductase] + H2O + H(+). The enzyme catalyses (5Z,8Z,11Z,14Z,17Z)-eicosapentaenoate + reduced [NADPH--hemoprotein reductase] + O2 = 19-hydroxy-(5Z,8Z,11Z,14Z,17Z)-eicosapentaenoate + oxidized [NADPH--hemoprotein reductase] + H2O + H(+). The catalysed reaction is (5Z,8Z,11Z,14Z)-eicosatetraenoate + reduced [NADPH--hemoprotein reductase] + O2 = (8R,9S)-epoxy-(5Z,11Z,14Z)-eicosatrienoate + oxidized [NADPH--hemoprotein reductase] + H2O + H(+). It catalyses the reaction (5Z,8Z,11Z,14Z)-eicosatetraenoate + reduced [NADPH--hemoprotein reductase] + O2 = (11R,12S)-epoxy-(5Z,8Z,14Z)-eicosatrienoate + oxidized [NADPH--hemoprotein reductase] + H2O + H(+). It carries out the reaction (5Z,8Z,11Z,14Z)-eicosatetraenoate + reduced [NADPH--hemoprotein reductase] + O2 = (14S,15R)-epoxy-(5Z,8Z,11Z)-eicosatrienoate + oxidized [NADPH--hemoprotein reductase] + H2O + H(+). The enzyme catalyses (5Z,8Z,11Z,14Z)-eicosatetraenoate + reduced [NADPH--hemoprotein reductase] + O2 = (14R,15S)-epoxy-(5Z,8Z,11Z)-eicosatrienoate + oxidized [NADPH--hemoprotein reductase] + H2O + H(+). The catalysed reaction is (5Z,8Z,11Z,14Z,17Z)-eicosapentaenoate + reduced [NADPH--hemoprotein reductase] + O2 = (17R,18S)-epoxy-(5Z,8Z,11Z,14Z)-eicosatetraenoate + oxidized [NADPH--hemoprotein reductase] + H2O + H(+). It catalyses the reaction (4Z,7Z,10Z,13Z,16Z,19Z)-docosahexaenoate + reduced [NADPH--hemoprotein reductase] + O2 = (19S,20R)-epoxy-(4Z,7Z,10Z,13Z,16Z)-docosapentaenoate + oxidized [NADPH--hemoprotein reductase] + H2O + H(+). It carries out the reaction (4Z,7Z,10Z,13Z,16Z,19Z)-docosahexaenoate + reduced [NADPH--hemoprotein reductase] + O2 = (19R,20S)-epoxy-(4Z,7Z,10Z,13Z,16Z)-docosapentaenoate + oxidized [NADPH--hemoprotein reductase] + H2O + H(+). The enzyme catalyses all-trans-retinol + reduced [NADPH--hemoprotein reductase] + O2 = all-trans-retinal + oxidized [NADPH--hemoprotein reductase] + 2 H2O + H(+). The catalysed reaction is all-trans-retinal + reduced [NADPH--hemoprotein reductase] + O2 = all-trans-retinoate + oxidized [NADPH--hemoprotein reductase] + H2O + 2 H(+). It catalyses the reaction (13S)-hydroperoxy-(9Z,11E)-octadecadienoate = 13-oxo-(9Z,11E)-octadecadienoate + H2O. It carries out the reaction (12S)-hydroperoxy-(5Z,8Z,10E,14Z)-eicosatetraenoate = 12-oxo-(5Z,8Z,10E,14Z)-eicosatetraenoate + H2O. The enzyme catalyses (15S)-hydroperoxy-(5Z,8Z,11Z,13E)-eicosatetraenoate = 15-oxo-(5Z,8Z,11Z,13E)-eicosatetraenoate + H2O. The catalysed reaction is (5S)-hydroperoxy-(6E,8Z,11Z,14Z)-eicosatetraenoate = 5-oxo-(6E,8Z,11Z,14Z)-eicosatetraenoate + H2O. It participates in steroid hormone biosynthesis. The protein operates within lipid metabolism; fatty acid metabolism. Its pathway is cofactor metabolism; retinol metabolism. Its function is as follows. A cytochrome P450 monooxygenase involved in the metabolism of various endogenous substrates, including fatty acids, steroid hormones and vitamins. Mechanistically, uses molecular oxygen inserting one oxygen atom into a substrate, and reducing the second into a water molecule, with two electrons provided by NADPH via cytochrome P450 reductase (CPR; NADPH-ferrihemoprotein reductase). Catalyzes the hydroxylation of carbon-hydrogen bonds. Exhibits high catalytic activity for the formation of hydroxyestrogens from estrone (E1) and 17beta-estradiol (E2), namely 2-hydroxy E1 and E2, as well as D-ring hydroxylated E1 and E2 at the C15alpha and C16alpha positions. Displays different regioselectivities for polyunsaturated fatty acids (PUFA) hydroxylation. Catalyzes the epoxidation of double bonds of certain PUFA. Converts arachidonic acid toward epoxyeicosatrienoic acid (EET) regioisomers, 8,9-, 11,12-, and 14,15-EET, that function as lipid mediators in the vascular system. Displays an absolute stereoselectivity in the epoxidation of eicosapentaenoic acid (EPA) producing the 17(R),18(S) enantiomer. May play an important role in all-trans retinoic acid biosynthesis in extrahepatic tissues. Catalyzes two successive oxidative transformation of all-trans retinol to all-trans retinal and then to the active form all-trans retinoic acid. May also participate in eicosanoids metabolism by converting hydroperoxide species into oxo metabolites (lipoxygenase-like reaction, NADPH-independent). This is Cytochrome P450 1A1 (CYP1A1) from Mesocricetus auratus (Golden hamster).